We begin with the raw amino-acid sequence, 81 residues long: Small ribosomal subunit protein uS17 (81 aa).

Belongs to the universal ribosomal protein uS17 family. In terms of assembly, part of the 30S ribosomal subunit.

In terms of biological role, one of the primary rRNA binding proteins, it binds specifically to the 5'-end of 16S ribosomal RNA. In Protochlamydia amoebophila (strain UWE25), this protein is Small ribosomal subunit protein uS17.